The primary structure comprises 411 residues: ATPase GET3B (411 aa).

Residues 1 to 67 constitute a chloroplast transit peptide; sequence MATLSSYLLS…RRRNSLQVKS (67 aa). An ATP-binding site is contributed by 95–102; it reads KGGVGKTS. Residue aspartate 124 is part of the active site. Asparagine 348 serves as a coordination point for ATP.

This sequence belongs to the arsA ATPase family.

Its subcellular location is the plastid. The protein localises to the chloroplast stroma. The enzyme catalyses ATP + H2O = ADP + phosphate + H(+). The polypeptide is ATPase GET3B (Arabidopsis thaliana (Mouse-ear cress)).